A 285-amino-acid polypeptide reads, in one-letter code: CCR4-NOT transcription complex subunit 7 (285 aa).

The a divalent metal cation site is built by Asp-40, Glu-42, Asp-161, Asp-230, and Glu-278.

The protein belongs to the CAF1 family. As to quaternary structure, component of the CCR4-NOT complex; distinct complexes seem to exist that differ in the participation of probably mutually exclusive catalytic subunits; the complex contains two deadenylase subunits, CNOT6 or CNOT6L, and CNOT7 or CNOT8. In the complex, interacts directly with CNOT1. Interacts with AGO2. Interacts with TOB1; recruited by TOB1 to a ternary complex with CPEB3 which is required for mRNA deadenylation and decay. Interacts with BTG1. Interacts with BTG2. Interacts with NANOS2. Interacts with ZFP36, ZFP36L1 and ZFP36L2; these interactions are inhibited in response to phorbol 12-myristate 13-acetate (PMA) treatment in a p38 MAPK-dependent manner. Interacts with BTG4. Interacts with EIF4E; this interaction is increased by CNOT7 interaction with BTG4. It depends on Mn(2+) as a cofactor. Requires Mg(2+) as cofactor. Co(2+) is required as a cofactor.

The protein localises to the nucleus. The protein resides in the cytoplasm. Its subcellular location is the P-body. It localises to the cytoplasmic ribonucleoprotein granule. The enzyme catalyses Exonucleolytic cleavage of poly(A) to 5'-AMP.. Has 3'-5' poly(A) exoribonuclease activity for synthetic poly(A) RNA substrate. Its function seems to be partially redundant with that of CNOT8. Catalytic component of the CCR4-NOT complex which is one of the major cellular mRNA deadenylases and is linked to various cellular processes including bulk mRNA degradation, miRNA-mediated repression, translational repression during translational initiation and general transcription regulation. During miRNA-mediated repression the complex also seems to act as translational repressor during translational initiation. Additional complex functions may be a consequence of its influence on mRNA expression. Required for miRNA-mediated mRNA deadenylation. Associates with members of the BTG family such as TOB1 and BTG2 and is required for their anti-proliferative activity. In Bos taurus (Bovine), this protein is CCR4-NOT transcription complex subunit 7 (CNOT7).